The sequence spans 185 residues: Photosystem I assembly protein Ycf4 (185 aa).

2 consecutive transmembrane segments (helical) span residues 24-44 (YIIGGMLTIGGIGFLLASISS) and 58-78 (ALLFIPQGIIMGAYGVIANLL).

Belongs to the Ycf4 family.

It is found in the cellular thylakoid membrane. In terms of biological role, seems to be required for the assembly of the photosystem I complex. This Prochlorococcus marinus (strain MIT 9215) protein is Photosystem I assembly protein Ycf4.